Here is a 243-residue protein sequence, read N- to C-terminus: UPF0702 transmembrane protein YkjA (243 aa).

3 helical membrane passes run Trp-3–Phe-23, Met-34–Leu-54, and Leu-58–Leu-78.

Belongs to the UPF0702 family.

The protein resides in the cell membrane. This Bacillus subtilis (strain 168) protein is UPF0702 transmembrane protein YkjA (ykjA).